The sequence spans 244 residues: MSSKLFCLRSFPSVQRTAWQRLVLPSTRKFSLTPTTFDKTPSGRIPPDQKAANIISSVPSTSLLTKSGVLTVTAAALATAISKGIYVVNDESIVVASFLGLVGVFGTLGRKAYNEWSDKTIAKIGGIMQAARNDHTSAIRERIDQVASLQEVESVTQALFHTSKETARMEAEIFELEQRVALAKEAKSVLDSWVHHEANVRAEQQERLVEDVLARVNSKVSTQKFQQDALNESLGEIEKVLASA.

A mitochondrion-targeting transit peptide spans 1 to 36 (MSSKLFCLRSFPSVQRTAWQRLVLPSTRKFSLTPTT).

This sequence belongs to the eukaryotic ATPase B chain family. As to quaternary structure, F-type ATPases have 2 components, CF(1) - the catalytic core - and CF(0) - the membrane proton channel. In yeast, the dimeric form of ATP synthase consists of 17 polypeptides: alpha, beta, gamma, delta, epsilon, 4 (B), 5 (OSCP), 6 (A), 8, 9 (C), d, E (Tim11), f, g, h, i/j and k.

The protein resides in the mitochondrion. The protein localises to the mitochondrion inner membrane. Mitochondrial membrane ATP synthase (F(1)F(0) ATP synthase or Complex V) produces ATP from ADP in the presence of a proton gradient across the membrane which is generated by electron transport complexes of the respiratory chain. F-type ATPases consist of two structural domains, F(1) - containing the extramembraneous catalytic core, and F(0) - containing the membrane proton channel, linked together by a central stalk and a peripheral stalk. During catalysis, ATP synthesis in the catalytic domain of F(1) is coupled via a rotary mechanism of the central stalk subunits to proton translocation. Part of the complex F(0) domain and the peripheric stalk, which acts as a stator to hold the catalytic alpha(3)beta(3) subcomplex and subunit a/ATP6 static relative to the rotary elements. The sequence is that of ATP synthase subunit 4, mitochondrial (atp4) from Schizosaccharomyces pombe (strain 972 / ATCC 24843) (Fission yeast).